The following is a 520-amino-acid chain: GMP synthase [glutamine-hydrolyzing] (520 aa).

Residues 9-202 (KILILDFGSQ…VRQICGCTGQ (194 aa)) form the Glutamine amidotransferase type-1 domain. Cys86 functions as the Nucleophile in the catalytic mechanism. Active-site residues include His176 and Glu178. The region spanning 203-395 (WTPGQIIEDA…LGLPHPMVYR (193 aa)) is the GMPS ATP-PPase domain. Residue 230–236 (SGGVDSS) coordinates ATP.

Homodimer.

It catalyses the reaction XMP + L-glutamine + ATP + H2O = GMP + L-glutamate + AMP + diphosphate + 2 H(+). It functions in the pathway purine metabolism; GMP biosynthesis; GMP from XMP (L-Gln route): step 1/1. Functionally, catalyzes the synthesis of GMP from XMP. This is GMP synthase [glutamine-hydrolyzing] from Syntrophotalea carbinolica (strain DSM 2380 / NBRC 103641 / GraBd1) (Pelobacter carbinolicus).